The chain runs to 66 residues: uncharacterized protein (66 aa).

Helical transmembrane passes span 4–24 (ALFI…LLIF) and 38–58 (LLTP…ILVL).

The protein resides in the membrane. This is an uncharacterized protein from Saccharomyces cerevisiae (strain ATCC 204508 / S288c) (Baker's yeast).